The primary structure comprises 597 residues: Probable translation initiation factor IF-2 (597 aa).

One can recognise a tr-type G domain in the interval Ile-4–Leu-221. The G1 stretch occupies residues Gly-13–Thr-20. Residue Gly-13–Thr-20 participates in GTP binding. The tract at residues Gly-38–His-42 is G2. The G3 stretch occupies residues Asp-77 to Gly-80. Residues Asp-77–His-81 and Asn-131–Asp-134 contribute to the GTP site. The G4 stretch occupies residues Asn-131 to Asp-134. The segment at Ser-199–Lys-201 is G5.

The protein belongs to the TRAFAC class translation factor GTPase superfamily. Classic translation factor GTPase family. IF-2 subfamily.

Functionally, function in general translation initiation by promoting the binding of the formylmethionine-tRNA to ribosomes. Seems to function along with eIF-2. The protein is Probable translation initiation factor IF-2 of Thermococcus sibiricus (strain DSM 12597 / MM 739).